An 876-amino-acid chain; its full sequence is Alanine--tRNA ligase (876 aa).

At lysine 74 the chain carries N6-acetyllysine. Positions 564, 568, 666, and 670 each coordinate Zn(2+).

This sequence belongs to the class-II aminoacyl-tRNA synthetase family. As to quaternary structure, homotetramer. Requires Zn(2+) as cofactor.

Its subcellular location is the cytoplasm. It catalyses the reaction tRNA(Ala) + L-alanine + ATP = L-alanyl-tRNA(Ala) + AMP + diphosphate. Catalyzes the attachment of alanine to tRNA(Ala) in a two-step reaction: alanine is first activated by ATP to form Ala-AMP and then transferred to the acceptor end of tRNA(Ala). Also edits incorrectly charged Ser-tRNA(Ala) and Gly-tRNA(Ala) via its editing domain. This chain is Alanine--tRNA ligase, found in Escherichia coli (strain SMS-3-5 / SECEC).